The chain runs to 1463 residues: DNA-directed RNA polymerase subunit beta'' (1463 aa).

Cys-239, Cys-312, Cys-319, and Cys-322 together coordinate Zn(2+). Disordered regions lie at residues 836–869 (TFTG…ETRM) and 987–1007 (TNRS…AQAR). Residues 860-869 (AANSSHETRM) show a composition bias toward polar residues. Over residues 987–996 (TNRSKTRRNA) the composition is skewed to basic residues. The span at 997-1007 (SGKTQVKAQAR) shows a compositional bias: polar residues.

It belongs to the RNA polymerase beta' chain family. RpoC2 subfamily. As to quaternary structure, in plastids the minimal PEP RNA polymerase catalytic core is composed of four subunits: alpha, beta, beta', and beta''. When a (nuclear-encoded) sigma factor is associated with the core the holoenzyme is formed, which can initiate transcription. Requires Zn(2+) as cofactor.

The protein resides in the plastid. It localises to the chloroplast. It carries out the reaction RNA(n) + a ribonucleoside 5'-triphosphate = RNA(n+1) + diphosphate. In terms of biological role, DNA-dependent RNA polymerase catalyzes the transcription of DNA into RNA using the four ribonucleoside triphosphates as substrates. In Nephroselmis olivacea (Green alga), this protein is DNA-directed RNA polymerase subunit beta''.